Consider the following 311-residue polypeptide: p-hydroxybenzoic acid efflux pump subunit AaeA (311 aa).

The helical transmembrane segment at 11–31 threads the bilayer; that stretch reads IGITLLVVLLAVIAIFKVWAF.

The protein belongs to the membrane fusion protein (MFP) (TC 8.A.1) family.

It localises to the cell inner membrane. Its function is as follows. Forms an efflux pump with AaeB. The chain is p-hydroxybenzoic acid efflux pump subunit AaeA from Yersinia enterocolitica serotype O:8 / biotype 1B (strain NCTC 13174 / 8081).